Consider the following 332-residue polypeptide: Oxygen-dependent coproporphyrinogen-III oxidase (332 aa).

Residue Ser119 participates in coproporphyrinogen III binding. The Proton donor role is filled by His133. Residues 135 to 137 (NVR) and 284 to 285 (GR) contribute to the coproporphyrinogen III site.

It belongs to the aerobic coproporphyrinogen-III oxidase family. In terms of assembly, homodimer.

The enzyme catalyses coproporphyrinogen III + O2 + 2 H(+) = protoporphyrinogen IX + 2 CO2 + 2 H2O. It functions in the pathway porphyrin-containing compound metabolism; protoporphyrin-IX biosynthesis; protoporphyrinogen-IX from coproporphyrinogen-III (O2 route): step 1/1. In terms of biological role, involved in the heme biosynthesis. Catalyzes the aerobic oxidative decarboxylation of propionate groups of rings A and B of coproporphyrinogen-III to yield the vinyl groups in protoporphyrinogen-IX. This is Oxygen-dependent coproporphyrinogen-III oxidase (cpox) from Dictyostelium discoideum (Social amoeba).